Here is a 448-residue protein sequence, read N- to C-terminus: Ribosomal protein uS12 methylthiotransferase RimO (448 aa).

In terms of domain architecture, MTTase N-terminal spans 7–123 (EKVSLVSLGC…IAEIIAEKKQ (117 aa)). The [4Fe-4S] cluster site is built by Cys-16, Cys-52, Cys-86, Cys-161, Cys-165, and Cys-168. One can recognise a Radical SAM core domain in the interval 147-377 (SSPHYTAYLK…MRTQARVSFK (231 aa)). A TRAM domain is found at 380–448 (RTLVDSEEDV…DYDLIGEIVD (69 aa)).

This sequence belongs to the methylthiotransferase family. RimO subfamily. The cofactor is [4Fe-4S] cluster.

It is found in the cytoplasm. The enzyme catalyses L-aspartate(89)-[ribosomal protein uS12]-hydrogen + (sulfur carrier)-SH + AH2 + 2 S-adenosyl-L-methionine = 3-methylsulfanyl-L-aspartate(89)-[ribosomal protein uS12]-hydrogen + (sulfur carrier)-H + 5'-deoxyadenosine + L-methionine + A + S-adenosyl-L-homocysteine + 2 H(+). Functionally, catalyzes the methylthiolation of an aspartic acid residue of ribosomal protein uS12. The sequence is that of Ribosomal protein uS12 methylthiotransferase RimO from Citrifermentans bemidjiense (strain ATCC BAA-1014 / DSM 16622 / JCM 12645 / Bem) (Geobacter bemidjiensis).